A 99-amino-acid polypeptide reads, in one-letter code: MAVAQFLEGINEEITDIRVMASKYDTSRKTALIYIAAPKADLNQVMSFRMRDEEGEITVRDIRSKHLNGKFIGLEISHEMGSDAAWNRFYRFMERMGYA.

Belongs to the Psb28 family. As to quaternary structure, part of the photosystem II complex.

Its subcellular location is the cell inner membrane. In Gloeobacter violaceus (strain ATCC 29082 / PCC 7421), this protein is Photosystem II reaction center Psb28 protein.